Reading from the N-terminus, the 495-residue chain is Cardiolipin synthase A (495 aa).

2 helical membrane-spanning segments follow: residues 9–29 (IEVL…WLIT) and 46–66 (MAWL…YLLL). 2 PLD phosphodiesterase domains span residues 227-254 (MDLR…IDPK) and 408-435 (EGGL…DMRS). Catalysis depends on residues His232, Lys234, Asp239, His413, Lys415, and Asp420.

This sequence belongs to the phospholipase D family. Cardiolipin synthase subfamily. ClsA sub-subfamily.

Its subcellular location is the cell membrane. It carries out the reaction 2 a 1,2-diacyl-sn-glycero-3-phospho-(1'-sn-glycerol) = a cardiolipin + glycerol. Catalyzes the reversible phosphatidyl group transfer from one phosphatidylglycerol molecule to another to form cardiolipin (CL) (diphosphatidylglycerol) and glycerol. The polypeptide is Cardiolipin synthase A (Wigglesworthia glossinidia brevipalpis).